The following is a 100-amino-acid chain: UPF0213 protein CKO_04549 (100 aa).

The region spanning threonine 2 to arginine 77 is the GIY-YIG domain.

Belongs to the UPF0213 family.

The sequence is that of UPF0213 protein CKO_04549 from Citrobacter koseri (strain ATCC BAA-895 / CDC 4225-83 / SGSC4696).